The following is a 645-amino-acid chain: Glucans biosynthesis glucosyltransferase H (645 aa).

The interval 1-28 (MDGTVTLSPAPTDLPPVSSLDAGQPTLP) is disordered. The next 7 membrane-spanning stretches (helical) occupy residues 64–84 (LIGG…SVLW), 98–118 (LFVL…AGFI), 423–443 (APMW…GAGI), 465–485 (AIWI…LGYI), 504–524 (ALSI…VMYL), 558–578 (SYGG…LVSP), and 580–600 (LAAW…VVAV).

Belongs to the glycosyltransferase 2 family. OpgH subfamily.

The protein localises to the cell inner membrane. The protein operates within glycan metabolism; osmoregulated periplasmic glucan (OPG) biosynthesis. Functionally, involved in the biosynthesis of osmoregulated periplasmic glucans (OPGs). This chain is Glucans biosynthesis glucosyltransferase H, found in Xanthomonas campestris pv. campestris (strain 8004).